Here is a 246-residue protein sequence, read N- to C-terminus: Octanoyltransferase (246 aa).

The BPL/LPL catalytic domain occupies Pro50 to Thr231. Residues Arg90–His97, Ala162–Gly164, and Gly175–Ser177 contribute to the substrate site. Catalysis depends on Cys193, which acts as the Acyl-thioester intermediate.

This sequence belongs to the LipB family.

Its subcellular location is the cytoplasm. It catalyses the reaction octanoyl-[ACP] + L-lysyl-[protein] = N(6)-octanoyl-L-lysyl-[protein] + holo-[ACP] + H(+). It functions in the pathway protein modification; protein lipoylation via endogenous pathway; protein N(6)-(lipoyl)lysine from octanoyl-[acyl-carrier-protein]: step 1/2. In terms of biological role, catalyzes the transfer of endogenously produced octanoic acid from octanoyl-acyl-carrier-protein onto the lipoyl domains of lipoate-dependent enzymes. Lipoyl-ACP can also act as a substrate although octanoyl-ACP is likely to be the physiological substrate. This chain is Octanoyltransferase, found in Burkholderia pseudomallei (strain 1106a).